The following is a 198-amino-acid chain: Glycerol-3-phosphate acyltransferase (198 aa).

4 helical membrane passes run 3–23, 81–101, 113–133, and 153–175; these read VEWL…AVIV, LFAA…FFQF, VLLG…IGVA, and YVWL…MLLV.

It belongs to the PlsY family. In terms of assembly, probably interacts with PlsX.

Its subcellular location is the cell inner membrane. It catalyses the reaction an acyl phosphate + sn-glycerol 3-phosphate = a 1-acyl-sn-glycero-3-phosphate + phosphate. It participates in lipid metabolism; phospholipid metabolism. Catalyzes the transfer of an acyl group from acyl-phosphate (acyl-PO(4)) to glycerol-3-phosphate (G3P) to form lysophosphatidic acid (LPA). This enzyme utilizes acyl-phosphate as fatty acyl donor, but not acyl-CoA or acyl-ACP. The chain is Glycerol-3-phosphate acyltransferase from Methylococcus capsulatus (strain ATCC 33009 / NCIMB 11132 / Bath).